Reading from the N-terminus, the 298-residue chain is uncharacterized protein (298 aa).

It is found in the cytoplasm. Its subcellular location is the nucleus. This is an uncharacterized protein from Schizosaccharomyces pombe (strain 972 / ATCC 24843) (Fission yeast).